Here is a 397-residue protein sequence, read N- to C-terminus: Succinate--CoA ligase [ADP-forming] subunit beta (397 aa).

Residues 9-254 form the ATP-grasp domain; it reads KALLKGYGAP…ETEEDAKEIE (246 aa). ATP contacts are provided by residues Lys46, 53–55, Glu109, Ala112, and Glu117; that span reads GRG. Residues Asn209 and Asp223 each contribute to the Mg(2+) site. Residues Asn274 and 331-333 each bind substrate; that span reads GIM.

It belongs to the succinate/malate CoA ligase beta subunit family. As to quaternary structure, heterotetramer of two alpha and two beta subunits. The cofactor is Mg(2+).

It carries out the reaction succinate + ATP + CoA = succinyl-CoA + ADP + phosphate. The catalysed reaction is GTP + succinate + CoA = succinyl-CoA + GDP + phosphate. It functions in the pathway carbohydrate metabolism; tricarboxylic acid cycle; succinate from succinyl-CoA (ligase route): step 1/1. Succinyl-CoA synthetase functions in the citric acid cycle (TCA), coupling the hydrolysis of succinyl-CoA to the synthesis of either ATP or GTP and thus represents the only step of substrate-level phosphorylation in the TCA. The beta subunit provides nucleotide specificity of the enzyme and binds the substrate succinate, while the binding sites for coenzyme A and phosphate are found in the alpha subunit. The sequence is that of Succinate--CoA ligase [ADP-forming] subunit beta from Agrobacterium fabrum (strain C58 / ATCC 33970) (Agrobacterium tumefaciens (strain C58)).